The chain runs to 244 residues: MKPQLSPKAIREIREGTCNPLGAPQVTTDLSENIILTSLDDLHNWARLSSLWPLLYGTACCFIEFAALIGSRFDFDRFGLVPRSSPRQADLLIVAGTVTMKMAPALVRLYEQMPEPKYVIAMGACTITGGMFSADSTTAVRGVDKLIPVDLYLPGCPPRPEAIFDAVIKLRKKVGNESILERTKTEQTHRYITSDHEMNLVFSENTGEYLNKTSANVIPPSKKEKITELPENTEKTEIINSVED.

Positions 60, 61, 125, and 156 each coordinate [4Fe-4S] cluster.

It belongs to the complex I 20 kDa subunit family. In terms of assembly, NDH-1 can be composed of about 15 different subunits; different subcomplexes with different compositions have been identified which probably have different functions. Requires [4Fe-4S] cluster as cofactor.

It localises to the cellular thylakoid membrane. The catalysed reaction is a plastoquinone + NADH + (n+1) H(+)(in) = a plastoquinol + NAD(+) + n H(+)(out). It catalyses the reaction a plastoquinone + NADPH + (n+1) H(+)(in) = a plastoquinol + NADP(+) + n H(+)(out). Its function is as follows. NDH-1 shuttles electrons from an unknown electron donor, via FMN and iron-sulfur (Fe-S) centers, to quinones in the respiratory and/or the photosynthetic chain. The immediate electron acceptor for the enzyme in this species is believed to be plastoquinone. Couples the redox reaction to proton translocation, and thus conserves the redox energy in a proton gradient. Cyanobacterial NDH-1 also plays a role in inorganic carbon-concentration. The sequence is that of NAD(P)H-quinone oxidoreductase subunit K from Prochlorococcus marinus (strain AS9601).